The sequence spans 575 residues: Flagellin B (575 aa).

Belongs to the bacterial flagellin family. In terms of assembly, heteromer of flaA and flaB.

The protein resides in the secreted. Its subcellular location is the bacterial flagellum. Its function is as follows. Flagellin is the subunit protein which polymerizes to form the filaments of bacterial flagella. In Campylobacter jejuni, this protein is Flagellin B (flaB).